The following is a 127-amino-acid chain: Aspartate 1-decarboxylase (127 aa).

S25 acts as the Schiff-base intermediate with substrate; via pyruvic acid in catalysis. Position 25 is a pyruvic acid (Ser) (S25). T57 lines the substrate pocket. The Proton donor role is filled by Y58. 73–75 (GAA) contributes to the substrate binding site.

The protein belongs to the PanD family. Heterooctamer of four alpha and four beta subunits. Pyruvate is required as a cofactor. In terms of processing, is synthesized initially as an inactive proenzyme, which is activated by self-cleavage at a specific serine bond to produce a beta-subunit with a hydroxyl group at its C-terminus and an alpha-subunit with a pyruvoyl group at its N-terminus.

It localises to the cytoplasm. It carries out the reaction L-aspartate + H(+) = beta-alanine + CO2. It participates in cofactor biosynthesis; (R)-pantothenate biosynthesis; beta-alanine from L-aspartate: step 1/1. Its function is as follows. Catalyzes the pyruvoyl-dependent decarboxylation of aspartate to produce beta-alanine. This Bacillus licheniformis (strain ATCC 14580 / DSM 13 / JCM 2505 / CCUG 7422 / NBRC 12200 / NCIMB 9375 / NCTC 10341 / NRRL NRS-1264 / Gibson 46) protein is Aspartate 1-decarboxylase.